A 463-amino-acid chain; its full sequence is DNA polymerase subunit gamma-2, mitochondrial (463 aa).

The N-terminal 44 residues, Met-1–Leu-44, are a transit peptide targeting the mitochondrion.

In terms of assembly, heterotrimer composed of a catalytic subunit and a homodimer of accessory subunits.

Its subcellular location is the mitochondrion. Its function is as follows. Mitochondrial polymerase processivity subunit. It regulates the polymerase and exonuclease activities promoting processive DNA synthesis. Binds to ss-DNA. The sequence is that of DNA polymerase subunit gamma-2, mitochondrial (polg2) from Xenopus laevis (African clawed frog).